Reading from the N-terminus, the 681-residue chain is MALLRSLSAQRTAISLVYGRNSSKSSNSVAVAACRSFHQRGSGSTSIAGEGAASESTRGVNGARFLHSGDRPLQASTLVQPEVVSSETVKRSMKQESSQEKNPSPAGSPQRDPLDVSFNDPIAAFKSKTTGELIRAYLVYMICSSEKLVEHNMTLMKLARNLLGQKLFVLLMKSSFYGHFVAGENRHTIVPALERLRSFGVKPILDYSVEEDITQEEAEKREVESSVSSAGDKKEEGSMPQYHVDKSFADRRYKVSSARTYFYLNEATCERNMEIFIKCLEAVSDDDRKAPRAVATGATFGTGITAIKLTALGRPQLLLQLSEVIMRTRKYMEDMVGGQGNVLTHHKTIKDLEKYYATLGDNKDVKEFLNNVTSDKEGILHLFPWSGIVDEDSQLSDTFRVPDPQTGQMRRLISQIPPKEEEMFRNMIRRLNTIVKAAADLDVRIMVDAEQTYFQPAISRITLEMMRKYNKDKAIVFNTYQCYLRETFREVNTDLEQAKRQNFYFGAKLVRGAYMDQERDRAKSLGYPDPVNPTFEATTDMYHRTLSECLRRIKLMKDCDDDARKIGIMVASHNEDTVRFAIQQMKEIGISPEDKVICFGQLLGMCDYITFPLGQAGYSAYKYIPYGPVEEVLPYLSRRAQENKGVLKKIKKEKRLLLSEIRRRLMRGQLFYKPKGNYVPI.

The N-terminal 30 residues, 1–30 (MALLRSLSAQRTAISLVYGRNSSKSSNSVA), are a transit peptide targeting the mitochondrion. Residues 76 to 87 (STLVQPEVVSSE) are compositionally biased toward polar residues. Disordered stretches follow at residues 76–113 (STLV…QRDP) and 216–239 (EEAE…EGSM). The span at 88–99 (TVKRSMKQESSQ) shows a compositional bias: basic and acidic residues.

This sequence belongs to the proline oxidase family. FAD is required as a cofactor. Most abundant in developing nervous system.

The protein localises to the mitochondrion matrix. It catalyses the reaction L-proline + a quinone = (S)-1-pyrroline-5-carboxylate + a quinol + H(+). It participates in amino-acid degradation; L-proline degradation into L-glutamate; L-glutamate from L-proline: step 1/2. Its function is as follows. Converts proline to delta-1-pyrroline-5-carboxylate. Involved in the conversion of proline to glutamate, which functions as a transmitter at neuromuscular junctions. Glutamate deficiency could possibly account for reduced motor activity. The polypeptide is Proline dehydrogenase 1, mitochondrial (slgA) (Drosophila melanogaster (Fruit fly)).